We begin with the raw amino-acid sequence, 222 residues long: Histidine biosynthesis bifunctional protein HisIE (222 aa).

The segment at 1-128 (MQPLSPAFID…SNALSPPADA (128 aa)) is phosphoribosyl-AMP cyclohydrolase. Residues 129-222 (CTELFRVIES…AARRGAPRRH (94 aa)) are phosphoribosyl-ATP pyrophosphohydrolase.

The protein in the N-terminal section; belongs to the PRA-CH family. It in the C-terminal section; belongs to the PRA-PH family.

The protein resides in the cytoplasm. It catalyses the reaction 1-(5-phospho-beta-D-ribosyl)-ATP + H2O = 1-(5-phospho-beta-D-ribosyl)-5'-AMP + diphosphate + H(+). The catalysed reaction is 1-(5-phospho-beta-D-ribosyl)-5'-AMP + H2O = 1-(5-phospho-beta-D-ribosyl)-5-[(5-phospho-beta-D-ribosylamino)methylideneamino]imidazole-4-carboxamide. It functions in the pathway amino-acid biosynthesis; L-histidine biosynthesis; L-histidine from 5-phospho-alpha-D-ribose 1-diphosphate: step 2/9. It participates in amino-acid biosynthesis; L-histidine biosynthesis; L-histidine from 5-phospho-alpha-D-ribose 1-diphosphate: step 3/9. This Parasynechococcus marenigrum (strain WH8102) protein is Histidine biosynthesis bifunctional protein HisIE.